A 178-amino-acid polypeptide reads, in one-letter code: ATP synthase subunit delta (178 aa).

It belongs to the ATPase delta chain family. In terms of assembly, F-type ATPases have 2 components, F(1) - the catalytic core - and F(0) - the membrane proton channel. F(1) has five subunits: alpha(3), beta(3), gamma(1), delta(1), epsilon(1). F(0) has three main subunits: a(1), b(2) and c(10-14). The alpha and beta chains form an alternating ring which encloses part of the gamma chain. F(1) is attached to F(0) by a central stalk formed by the gamma and epsilon chains, while a peripheral stalk is formed by the delta and b chains.

It localises to the cell inner membrane. In terms of biological role, f(1)F(0) ATP synthase produces ATP from ADP in the presence of a proton or sodium gradient. F-type ATPases consist of two structural domains, F(1) containing the extramembraneous catalytic core and F(0) containing the membrane proton channel, linked together by a central stalk and a peripheral stalk. During catalysis, ATP synthesis in the catalytic domain of F(1) is coupled via a rotary mechanism of the central stalk subunits to proton translocation. Functionally, this protein is part of the stalk that links CF(0) to CF(1). It either transmits conformational changes from CF(0) to CF(1) or is implicated in proton conduction. The sequence is that of ATP synthase subunit delta from Pseudomonas fluorescens (strain Pf0-1).